Reading from the N-terminus, the 447-residue chain is Phosphoglucosamine mutase (447 aa).

Serine 102 (phosphoserine intermediate) is an active-site residue. Residues serine 102, aspartate 241, aspartate 243, and aspartate 245 each coordinate Mg(2+). Serine 102 carries the post-translational modification Phosphoserine.

The protein belongs to the phosphohexose mutase family. Mg(2+) serves as cofactor. Post-translationally, activated by phosphorylation.

The enzyme catalyses alpha-D-glucosamine 1-phosphate = D-glucosamine 6-phosphate. Functionally, catalyzes the conversion of glucosamine-6-phosphate to glucosamine-1-phosphate. This is Phosphoglucosamine mutase from Ruegeria sp. (strain TM1040) (Silicibacter sp.).